Consider the following 335-residue polypeptide: ATP-dependent 6-phosphofructokinase (335 aa).

Gly-11 is an ATP binding site. 21-25 (RAVVR) is an ADP binding site. Residues 72-73 (RY) and 102-105 (GDGS) contribute to the ATP site. Asp-103 provides a ligand contact to Mg(2+). 125 to 127 (TID) provides a ligand contact to substrate. The active-site Proton acceptor is the Asp-127. ADP is bound at residue Arg-154. Residues Arg-162 and 169-171 (MGR) contribute to the substrate site. ADP is bound by residues 185 to 187 (GAD) and 213 to 215 (KKH). Residues Glu-222, Arg-244, and 250–253 (HIQR) contribute to the substrate site.

The protein belongs to the phosphofructokinase type A (PFKA) family. ATP-dependent PFK group I subfamily. Prokaryotic clade 'B1' sub-subfamily. As to quaternary structure, homotetramer. Requires Mg(2+) as cofactor.

Its subcellular location is the cytoplasm. It catalyses the reaction beta-D-fructose 6-phosphate + ATP = beta-D-fructose 1,6-bisphosphate + ADP + H(+). Its pathway is carbohydrate degradation; glycolysis; D-glyceraldehyde 3-phosphate and glycerone phosphate from D-glucose: step 3/4. Its activity is regulated as follows. Allosterically activated by ADP and other diphosphonucleosides, and allosterically inhibited by phosphoenolpyruvate. In terms of biological role, catalyzes the phosphorylation of D-fructose 6-phosphate to fructose 1,6-bisphosphate by ATP, the first committing step of glycolysis. This Streptococcus pneumoniae (strain ATCC BAA-255 / R6) protein is ATP-dependent 6-phosphofructokinase.